Here is a 118-residue protein sequence, read N- to C-terminus: NLIQFSNMIQCANKGSRPSLHYADYGCYCGWGGSGTPVDELDRCCKVHDDCYDQAGKKGCFPKLTLYSWDCTGNVPICNPKSKCKDFVCACDAAAAKCFAKAPYNKANWNIDTKTRCK.

Intrachain disulfides connect cysteine 11–cysteine 71, cysteine 27–cysteine 117, cysteine 29–cysteine 45, cysteine 44–cysteine 98, cysteine 51–cysteine 91, cysteine 60–cysteine 84, and cysteine 78–cysteine 89. Residues tyrosine 28, glycine 30, and glycine 32 each coordinate Ca(2+). Histidine 48 is a catalytic residue. Position 49 (aspartate 49) interacts with Ca(2+). Aspartate 92 is a catalytic residue.

This sequence belongs to the phospholipase A2 family. Group I subfamily. D49 sub-subfamily. It depends on Ca(2+) as a cofactor. Expressed by the venom gland.

The protein localises to the secreted. It carries out the reaction a 1,2-diacyl-sn-glycero-3-phosphocholine + H2O = a 1-acyl-sn-glycero-3-phosphocholine + a fatty acid + H(+). PLA2 catalyzes the calcium-dependent hydrolysis of the 2-acyl groups in 3-sn-phosphoglycerides. The sequence is that of Basic phospholipase A2 PA-10A from Pseudechis australis (Mulga snake).